The following is a 684-amino-acid chain: Threonine--tRNA ligase (684 aa).

Positions 1 to 64 constitute a TGS domain; it reads MTAPNPSSLV…ESDTEVEPVA (64 aa). Residues 261-567 form a catalytic region; sequence DHRKLGVELD…LTEHYAGAFP (307 aa). The Zn(2+) site is built by Cys366, His417, and His544.

Belongs to the class-II aminoacyl-tRNA synthetase family. As to quaternary structure, homodimer. Requires Zn(2+) as cofactor.

The protein resides in the cytoplasm. The catalysed reaction is tRNA(Thr) + L-threonine + ATP = L-threonyl-tRNA(Thr) + AMP + diphosphate + H(+). Its function is as follows. Catalyzes the attachment of threonine to tRNA(Thr) in a two-step reaction: L-threonine is first activated by ATP to form Thr-AMP and then transferred to the acceptor end of tRNA(Thr). Also edits incorrectly charged L-seryl-tRNA(Thr). The chain is Threonine--tRNA ligase from Mycobacteroides abscessus (strain ATCC 19977 / DSM 44196 / CCUG 20993 / CIP 104536 / JCM 13569 / NCTC 13031 / TMC 1543 / L948) (Mycobacterium abscessus).